We begin with the raw amino-acid sequence, 285 residues long: Homeobox protein vex1 (285 aa).

Disordered stretches follow at residues 30–54 (KSGN…LPSV) and 69–88 (NEER…APQE). The segment covering 69-80 (NEERSPPVKDQL) has biased composition (basic and acidic residues). Positions 131 to 190 (AARARTKFSPEQLEELERSFKENRYIGSSEKRRLSKVLKLSETQIKTWFQNRRMKFKRQT) form a DNA-binding region, homeobox.

In terms of tissue distribution, widely expressed in the embryo prior to gastrulation. Becomes restricted to the ventral marginal zone by mid/late gastrulation. Ventral localization persists during gastrulation and neurulation in the ventral region of the closed blastopore and in the proctodeum during tail bud stages.

The protein localises to the nucleus. In terms of biological role, transcriptional repressor. Acts in a ventral signaling pathway downstream of bmp4 to antagonize the Spemann organizer and ventrally pattern the embryonic mesoderm. Represses transcription of the dorsal genes gsc and otx2. This chain is Homeobox protein vex1, found in Xenopus laevis (African clawed frog).